A 158-amino-acid chain; its full sequence is C-type lectin BML-2 (158 aa).

Residues 1 to 23 (MGHFTFTGLCLLAMFLSLRGAEC) form the signal peptide. Disulfide bonds link Cys-26–Cys-37, Cys-54–Cys-154, Cys-61–Cys-156, and Cys-129–Cys-146. The C-type lectin domain maps to 33–155 (KNGLCYKVFS…CESLHPFLCQ (123 aa)). Residues 119-121 (EPN) carry the Mannose-binding motif. A glycan (N-linked (GlcNAc...) asparagine) is linked at Asn-121. Ca(2+) contacts are provided by Glu-127, Asn-142, and Asp-143.

It belongs to the true venom lectin family. Dimer. Probably non-covalently linked. As to expression, expressed by the venom gland.

Its subcellular location is the secreted. Functionally, recombinant C-type lectin BML-2 is able to agglutinate erythrocytes. May be a calcium-dependent lectin. The sequence is that of C-type lectin BML-2 from Bungarus multicinctus (Many-banded krait).